The following is a 98-amino-acid chain: DNA-binding protein Fis (98 aa).

Residues Gln74–Lys93 constitute a DNA-binding region (H-T-H motif).

This sequence belongs to the transcriptional regulatory Fis family. As to quaternary structure, homodimer.

Its function is as follows. Activates ribosomal RNA transcription. Plays a direct role in upstream activation of rRNA promoters. The protein is DNA-binding protein Fis of Vibrio parahaemolyticus serotype O3:K6 (strain RIMD 2210633).